The primary structure comprises 332 residues: MGKIYASLKSIASYIPPTCISNVDFEKTLDTNDEWITKRTGIKTRYFALPSQQTSDLAYEAGKKAIERAGIEPKDIDAVIVATLSPDYLTMPSTACITSFKLGIENKAAFDISAACSGFVYLLSLAKSFIESGTYKQILIIGAEKTSSVLDFSDRSTCVLFGDGAGACVIGSTNDEKAAILGVNVSANGRYQDFLCTPRVHATFGATQAQEKQSFIQMKGNETFKVAVKTLVSEVKEILNTHHINPQDVSFFIPHQANLRIINAVGENLNFTPEQIVVSIQKYGNTSAASIPMAMNDLYEEKKLKYGDLMLLDALGGGLTWGSALVHFGGTN.

Catalysis depends on residues C116 and H255. An ACP-binding region spans residues 256-260 (QANLR). N285 is an active-site residue.

This sequence belongs to the thiolase-like superfamily. FabH family. As to quaternary structure, homodimer.

Its subcellular location is the cytoplasm. It carries out the reaction malonyl-[ACP] + acetyl-CoA + H(+) = 3-oxobutanoyl-[ACP] + CO2 + CoA. Its pathway is lipid metabolism; fatty acid biosynthesis. Catalyzes the condensation reaction of fatty acid synthesis by the addition to an acyl acceptor of two carbons from malonyl-ACP. Catalyzes the first condensation reaction which initiates fatty acid synthesis and may therefore play a role in governing the total rate of fatty acid production. Possesses both acetoacetyl-ACP synthase and acetyl transacylase activities. Its substrate specificity determines the biosynthesis of branched-chain and/or straight-chain of fatty acids. The protein is Beta-ketoacyl-[acyl-carrier-protein] synthase III of Helicobacter hepaticus (strain ATCC 51449 / 3B1).